A 613-amino-acid polypeptide reads, in one-letter code: MPKYRSATTTHGRNMAGARALWRATGVKDEDFGKPIIAVVNSFTQFVPGHVHLKDMGQLVAGEIEKAGGIAKEFNTIAVDDGIAMGHGGMLYSLPSRELIADSVEYMVNAHCADAMVCISNCDKITPGMLMAALRLNIPVIFVSGGPMEAGKTKLSDQILKLDLVDAMIQGADPTVSDEQSEQIERSACPTCGSCSGMFTANSMNCLTEALGLSQPGNGSMLATHADREQLFINAGKRIVDLTKRYYLNDDDTALPRNIANKKAFENAMALDIAMGGSTNTVLHLLAAAKEGDIDFDMDDIDRMSRLIPHLCKVAPSTPKYHMEDVHRAGGVYSILGELDRAGLLHNDTHNILGQTFAESLAEYDIAVTESQAVKDFFRAGPAGIRTTKAFSQSCRWDTLDDDRTNGCIRSKEHAFSQDGGLAVLSGNIAIKGCIVKTAGVDENSLVFSGPAVVFESQDTAVEGILGGKVKSGDVVVIRYEGPKGGPGMQEMLYPTTYLKSIGLGKECALITDGRFSGGTSGLSIGHVSPEAAAGGTIGLVNDGDIINIDIPNRSIELHVDDTELAQRRATADQQGWKPVNRQREVSYALRAYALLATSADQGAIRDKSKLEG.

Residue D81 participates in Mg(2+) binding. C122 lines the [2Fe-2S] cluster pocket. Residues D123 and K124 each coordinate Mg(2+). K124 is subject to N6-carboxylysine. Residue C195 participates in [2Fe-2S] cluster binding. E491 serves as a coordination point for Mg(2+). Residue S517 is the Proton acceptor of the active site.

Belongs to the IlvD/Edd family. As to quaternary structure, homodimer. [2Fe-2S] cluster serves as cofactor. Mg(2+) is required as a cofactor.

The enzyme catalyses (2R)-2,3-dihydroxy-3-methylbutanoate = 3-methyl-2-oxobutanoate + H2O. It carries out the reaction (2R,3R)-2,3-dihydroxy-3-methylpentanoate = (S)-3-methyl-2-oxopentanoate + H2O. The protein operates within amino-acid biosynthesis; L-isoleucine biosynthesis; L-isoleucine from 2-oxobutanoate: step 3/4. It participates in amino-acid biosynthesis; L-valine biosynthesis; L-valine from pyruvate: step 3/4. Its function is as follows. Functions in the biosynthesis of branched-chain amino acids. Catalyzes the dehydration of (2R,3R)-2,3-dihydroxy-3-methylpentanoate (2,3-dihydroxy-3-methylvalerate) into 2-oxo-3-methylpentanoate (2-oxo-3-methylvalerate) and of (2R)-2,3-dihydroxy-3-methylbutanoate (2,3-dihydroxyisovalerate) into 2-oxo-3-methylbutanoate (2-oxoisovalerate), the penultimate precursor to L-isoleucine and L-valine, respectively. The chain is Dihydroxy-acid dehydratase from Photobacterium profundum (strain SS9).